Here is a 342-residue protein sequence, read N- to C-terminus: Cell cycle control protein 50C (342 aa).

The Cytoplasmic portion of the chain corresponds to 1–33 (MEMMPQYDLSRLPENTALKQQTLPTQQLNLSAS). The chain crosses the membrane as a helical span at residues 34 to 54 (VVLSIFFITGGFCLSIGIILL). Residues 55 to 306 (LSAKSTKKIE…STLTWIGGGG (252 aa)) lie on the Extracellular side of the membrane. Residues Asn66, Asn80, Asn89, and Asn205 are each glycosylated (N-linked (GlcNAc...) asparagine). A helical membrane pass occupies residues 307 to 327 (LFLGLTYTVTGALTLLASFAI). Residues 328-342 (LTIHLMLKRSKLNFL) are Cytoplasmic-facing.

Belongs to the CDC50/LEM3 family. Specifically expressed in testis.

It is found in the membrane. This chain is Cell cycle control protein 50C (Tmem30c), found in Mus musculus (Mouse).